The chain runs to 143 residues: Large ribosomal subunit protein uL11 (143 aa).

This sequence belongs to the universal ribosomal protein uL11 family. In terms of assembly, part of the ribosomal stalk of the 50S ribosomal subunit. Interacts with L10 and the large rRNA to form the base of the stalk. L10 forms an elongated spine to which L12 dimers bind in a sequential fashion forming a multimeric L10(L12)X complex. Post-translationally, one or more lysine residues are methylated.

Functionally, forms part of the ribosomal stalk which helps the ribosome interact with GTP-bound translation factors. This is Large ribosomal subunit protein uL11 from Borreliella afzelii (strain PKo) (Borrelia afzelii).